Consider the following 437-residue polypeptide: Enolase 2 (437 aa).

Residue glutamine 162 coordinates (2R)-2-phosphoglycerate. Catalysis depends on glutamate 204, which acts as the Proton donor. Aspartate 251, glutamate 297, and aspartate 324 together coordinate Mg(2+). The (2R)-2-phosphoglycerate site is built by lysine 349, arginine 378, serine 379, and lysine 400. The Proton acceptor role is filled by lysine 349.

It belongs to the enolase family. Mg(2+) is required as a cofactor.

It is found in the cytoplasm. The protein localises to the secreted. It localises to the cell surface. It catalyses the reaction (2R)-2-phosphoglycerate = phosphoenolpyruvate + H2O. It functions in the pathway carbohydrate degradation; glycolysis; pyruvate from D-glyceraldehyde 3-phosphate: step 4/5. Its function is as follows. Catalyzes the reversible conversion of 2-phosphoglycerate (2-PG) into phosphoenolpyruvate (PEP). It is essential for the degradation of carbohydrates via glycolysis. This chain is Enolase 2, found in Chlorobaculum tepidum (strain ATCC 49652 / DSM 12025 / NBRC 103806 / TLS) (Chlorobium tepidum).